The chain runs to 505 residues: Peroxisome proliferator-activated receptor gamma (505 aa).

Thr-84 is a glycosylation site (O-linked (GlcNAc) threonine). The residue at position 112 (Ser-112) is a Phosphoserine; by MAPK. Residues 136–210 (AIECRVCGDK…VGMSHNAIRF (75 aa)) constitute a DNA-binding region (nuclear receptor). 2 NR C4-type zinc fingers span residues 139-159 (CRVC…CEGC) and 176-198 (CDLN…FQKC). An interaction with FAM120B region spans residues 205–280 (HNAIRFGRMP…DKSPFVIYDM (76 aa)). One can recognise an NR LBD domain in the interval 238–503 (DLRALAKHLY…HPLLQEIYKD (266 aa)). Lys-252 participates in a covalent cross-link: Glycyl lysine isopeptide (Lys-Gly) (interchain with G-Cter in ubiquitin). The 9aaTAD motif lies at 495-503 (PLLQEIYKD).

It belongs to the nuclear hormone receptor family. NR1 subfamily. Interacts with FOXO1 (acetylated form). Heterodimer with other nuclear receptors, such as RXRA. The heterodimer with the retinoic acid receptor RXRA is called adipocyte-specific transcription factor ARF6. Interacts with NCOA6 coactivator, leading to a strong increase in transcription of target genes. Interacts with coactivator PPARBP, leading to a mild increase in transcription of target genes. Interacts with NOCA7 in a ligand-inducible manner. Interacts with NCOA1 and NCOA2 LXXLL motifs. Interacts with ASXL1, ASXL2, DNTTIP2, FAM120B, MAP2K1/MEK1, NR0B2, PDPK1, PRDM16, PRMT2 and TGFB1I1. Interacts (when activated by agonist) with PPP5C. Interacts with HELZ2 and THRAP3; the interaction stimulates the transcriptional activity of PPARG. Interacts with PER2, the interaction is ligand dependent and blocks PPARG recruitment to target promoters. Interacts with NOCT. Interacts with ACTN4. Interacts (when in the liganded conformation) with GPS2. Interacts with CRY1 and CRY2 in a ligand-dependent manner. In the absence of hormonal ligand, interacts with TACC1. In macrophages, interacts with PAQR3 and STUB1; the interactions promote PPARG poylubiquitination and STUB1-mediated degradation. Post-translationally, O-GlcNAcylation at Thr-84 reduces transcriptional activity in adipocytes. In terms of processing, phosphorylated at basal conditions and dephosphorylated when treated with the ligand. May be dephosphorylated by PPP5C. The phosphorylated form may be inactive and dephosphorylation induces adipogenic activity. Ubiquitinated by E3 ubiquitin-protein ligase complex containing FBXO9; leading to proteasomal degradation. Ubiquitinated at Lys-252 by TRIM55 leading to proteasomal degradation. Ubiquitinated by E3 ubiquitin-protein ligase STUB1/CHIP; leading to proteasomal degradation. As to expression, highest expression in adipose tissue. Lower in liver, heart, kidney, stomach, duodenum and colon.

It localises to the nucleus. Its subcellular location is the cytoplasm. Its activity is regulated as follows. PDPK1 activates its transcriptional activity independently of its kinase activity. Nuclear receptor that binds peroxisome proliferators such as hypolipidemic drugs and fatty acids. Once activated by a ligand, the nuclear receptor binds to DNA specific PPAR response elements (PPRE) and modulates the transcription of its target genes, such as acyl-CoA oxidase. It therefore controls the peroxisomal beta-oxidation pathway of fatty acids. Key regulator of adipocyte differentiation and glucose homeostasis. ARF6 acts as a key regulator of the tissue-specific adipocyte P2 (aP2) enhancer. Acts as a critical regulator of gut homeostasis by suppressing NF-kappa-B-mediated pro-inflammatory responses. Plays a role in the regulation of cardiovascular circadian rhythms by regulating the transcription of BMAL1 in the blood vessels. In Macaca mulatta (Rhesus macaque), this protein is Peroxisome proliferator-activated receptor gamma (PPARG).